A 617-amino-acid polypeptide reads, in one-letter code: Probable Xaa-Pro aminopeptidase P (617 aa).

Residues Asp414, Asp425, Glu523, and Glu537 each contribute to the Mn(2+) site.

The protein belongs to the peptidase M24B family. Requires Mn(2+) as cofactor.

It catalyses the reaction Release of any N-terminal amino acid, including proline, that is linked to proline, even from a dipeptide or tripeptide.. Functionally, catalyzes the removal of a penultimate prolyl residue from the N-termini of peptides. The protein is Probable Xaa-Pro aminopeptidase P (AMPP) of Colletotrichum graminicola (strain M1.001 / M2 / FGSC 10212) (Maize anthracnose fungus).